The primary structure comprises 244 residues: Orotidine 5'-phosphate decarboxylase (244 aa).

Residues Asp-10, Lys-32, 59–68 (DLKLHDIPNT), Thr-122, Arg-184, Gln-193, Gly-213, and Arg-214 contribute to the substrate site. Lys-61 functions as the Proton donor in the catalytic mechanism.

The protein belongs to the OMP decarboxylase family. Type 1 subfamily. Homodimer.

It carries out the reaction orotidine 5'-phosphate + H(+) = UMP + CO2. It participates in pyrimidine metabolism; UMP biosynthesis via de novo pathway; UMP from orotate: step 2/2. In terms of biological role, catalyzes the decarboxylation of orotidine 5'-monophosphate (OMP) to uridine 5'-monophosphate (UMP). This Geobacillus kaustophilus (strain HTA426) protein is Orotidine 5'-phosphate decarboxylase.